The following is a 427-amino-acid chain: MIKVNLDHTDININKVADLNKIKEIHQMIFNKTGKGNDFLGWLNWPVNFNKTEYEQMKLVANDLKNQIEVLVVIGIGGSYLGCRAADEMIRGLYHQNKVELIYTGNTMSSTYIYQVVEYLKNKNFGICVISKSGTTTEPGISFRVFEKLLVDKVGLEKAKSLIVAITDKNKGALKQLAEKKGYQTFVIPNDIGGRFSVLTPVGIFPLLVSGINTDKIFQGALKAKNDLINDDLSNQAYKYAVVRNYLYNQGYKTEALISYELQLQMLTEWWKQLFGESEGKENKGLLPSSMIFSTDLHSLGQWVQEGPRNVMFETIIKIEKPNHDLNVPIDEDNYDGLNYLTKKSFHQINQTALKGVIQAHSVTGKMPNIVLEFEKMDDEQFGYLVYFFELALAMSAYLLDVNPFNQPGVEVYKYNMFKLLNKPGIK.

Glutamate 277 functions as the Proton donor in the catalytic mechanism. Active-site residues include histidine 298 and lysine 414.

This sequence belongs to the GPI family.

The protein localises to the cytoplasm. The enzyme catalyses alpha-D-glucose 6-phosphate = beta-D-fructose 6-phosphate. The protein operates within carbohydrate biosynthesis; gluconeogenesis. Its pathway is carbohydrate degradation; glycolysis; D-glyceraldehyde 3-phosphate and glycerone phosphate from D-glucose: step 2/4. Its function is as follows. Catalyzes the reversible isomerization of glucose-6-phosphate to fructose-6-phosphate. This chain is Glucose-6-phosphate isomerase, found in Mycoplasma capricolum subsp. capricolum (strain California kid / ATCC 27343 / NCTC 10154).